A 479-amino-acid chain; its full sequence is Auxin transporter-like protein 1 (479 aa).

Over 1–58 (MLSEKQGEETMMSSLNETIELNEEREEEKGASPGSGFKNFLWHGGSVYDAWFSCASNQ) the chain is Cytoplasmic. Residues 59–76 (VAQVLLTLPYSFSQLGMI) traverse the membrane as a helical segment. Residues 77 to 78 (SG) lie on the Extracellular side of the membrane. A helical transmembrane segment spans residues 79–99 (IIFQVFYGLMGSWTAYLISIL). The Cytoplasmic portion of the chain corresponds to 100 to 134 (YVEYRSRKEKENVSFKNHVIQWFEVLEGLLGPYWK). Residues 135-155 (AIGLAFNCTFLLFGSVIQLIA) form a helical membrane-spanning segment. The Extracellular segment spans residues 156 to 171 (CASNIYYINDHLDKRT). Residues 172–192 (WTYIFGACCATTVFIPSFHNY) form a helical membrane-spanning segment. The Cytoplasmic portion of the chain corresponds to 193–195 (RIW). A helical transmembrane segment spans residues 196–216 (SFLGLGMTTYTAWYMTIAAIV). At 217-231 (HGQVENVVHSGPKKM) the chain is on the extracellular side. The helical transmembrane segment at 232–252 (VWYFTGATNILYTFGGHAVTV) threads the bilayer. At 253–265 (EIMHAMWKPQKFK) the chain is on the cytoplasmic side. A helical transmembrane segment spans residues 266–286 (AIYFFATLYVFTLTLPSAIAV). At 287–313 (YWAFGDQLLDHSNAFSLLPRNAWRDAG) the chain is on the extracellular side. The helical transmembrane segment at 314–334 (VILMLIHQFITFGFACTPLYF) threads the bilayer. The Cytoplasmic portion of the chain corresponds to 335 to 355 (VWEKVIGMHDTKSIFLRALAR). Residues 356-376 (LPVVIPIWFLAIIFPFFGPIN) form a helical membrane-spanning segment. Ser377 is a topological domain (extracellular). The helical transmembrane segment at 378–398 (AVGALLVSFTVYVIPASAHML) threads the bilayer. The Cytoplasmic segment spans residues 399–421 (TYRSASARQNAAEKLPKVIPSWT). The helical transmembrane segment at 422-442 (LMYVINAFVVIWVTIVGFGFG) threads the bilayer. At 443-479 (GWASMTNFIKQVDTFGLFAKCYQCPPKLPASNHTMHH) the chain is on the extracellular side. A glycan (N-linked (GlcNAc...) asparagine) is linked at Asn474.

The protein belongs to the amino acid/polyamine transporter 2 family. Amino acid/auxin permease (AAAP) (TC 2.A.18.1) subfamily. Shoots and roots of nodulating plants. Higher levels in roots, flowers and stems, lower in nodules, leaves, petioles and shoot apices.

Its subcellular location is the cell membrane. Functionally, carrier protein involved in proton-driven auxin influx. Mediates the formation of auxin gradient from developing leaves (site of auxin biosynthesis) to tips by contributing to the loading of auxin in vascular tissues and facilitating acropetal (base to tip) auxin transport within inner tissues of the root apex, and basipetal (tip to base) auxin transport within outer tissues of the root apex. May be involved in lateral roots and nodules formation. This Medicago truncatula (Barrel medic) protein is Auxin transporter-like protein 1 (LAX1).